A 713-amino-acid polypeptide reads, in one-letter code: Forkhead box protein P2 (713 aa).

Polar residues predominate over residues 1–28 (MMQESATETISNSSMNQNGMSTLSSQLD). 2 disordered regions span residues 1–44 (MMQE…SSEV) and 283–337 (KHGG…TGAS). The span at 290–303 (TTNNSSSTTSSTTS) shows a compositional bias: low complexity. Positions 313–322 (SIVNGQSSVL) are enriched in polar residues. Positions 324–335 (ARRDSSSHEETG) are enriched in basic and acidic residues. A C2H2-type zinc finger spans residues 344 to 369 (GVCKWPGCESICEDFGQFLKHLNNEH). A leucine-zipper region spans residues 386–407 (VQQLEIQLSKERERLQAMMTHL). The segment at 420–424 (PLNLV) is CTBP1-binding. Low complexity predominate over residues 436–457 (TSPQSLPQTPTTPTAPVTPITQ). Residues 436-463 (TSPQSLPQTPTTPTAPVTPITQGPSVIT) are disordered. Residues 502-592 (RPPFTYATLI…SQKITGSPTL (91 aa)) constitute a DNA-binding region (fork-head). 2 disordered regions span residues 647-666 (LDHI…QPHI) and 676-713 (VIAE…EDLE). Positions 697 to 713 (LEDDREIEEEPLSEDLE) are enriched in acidic residues.

Forms homodimers and heterodimers with FOXP1 and FOXP4. Dimerization is required for DNA-binding. Interacts with CTBP1. Interacts with FOXP1. Interacts with TBR1. Interacts with ZMYM2.

Its subcellular location is the nucleus. Its function is as follows. Transcriptional repressor that may play a role in the specification and differentiation of lung epithelium. May also play a role in developing neural, gastrointestinal and cardiovascular tissues. Can act with CTBP1 to synergistically repress transcription but CTPBP1 is not essential. Plays a role in synapse formation by regulating SRPX2 levels. This is Forkhead box protein P2 (FOXP2) from Gorilla gorilla gorilla (Western lowland gorilla).